The sequence spans 309 residues: Elongation factor Ts (309 aa).

The involved in Mg(2+) ion dislocation from EF-Tu stretch occupies residues 80 to 83; that stretch reads TDFV.

Belongs to the EF-Ts family.

The protein resides in the cytoplasm. Functionally, associates with the EF-Tu.GDP complex and induces the exchange of GDP to GTP. It remains bound to the aminoacyl-tRNA.EF-Tu.GTP complex up to the GTP hydrolysis stage on the ribosome. In Rhodospirillum rubrum (strain ATCC 11170 / ATH 1.1.1 / DSM 467 / LMG 4362 / NCIMB 8255 / S1), this protein is Elongation factor Ts.